The sequence spans 250 residues: 3-deoxy-manno-octulosonate cytidylyltransferase (250 aa).

It belongs to the KdsB family.

It is found in the cytoplasm. The enzyme catalyses 3-deoxy-alpha-D-manno-oct-2-ulosonate + CTP = CMP-3-deoxy-beta-D-manno-octulosonate + diphosphate. The protein operates within nucleotide-sugar biosynthesis; CMP-3-deoxy-D-manno-octulosonate biosynthesis; CMP-3-deoxy-D-manno-octulosonate from 3-deoxy-D-manno-octulosonate and CTP: step 1/1. It participates in bacterial outer membrane biogenesis; lipopolysaccharide biosynthesis. Its function is as follows. Activates KDO (a required 8-carbon sugar) for incorporation into bacterial lipopolysaccharide in Gram-negative bacteria. The polypeptide is 3-deoxy-manno-octulosonate cytidylyltransferase (Francisella tularensis subsp. tularensis (strain FSC 198)).